The primary structure comprises 141 residues: Putative pre-16S rRNA nuclease (141 aa).

The protein belongs to the YqgF nuclease family.

The protein resides in the cytoplasm. Its function is as follows. Could be a nuclease involved in processing of the 5'-end of pre-16S rRNA. This chain is Putative pre-16S rRNA nuclease, found in Sodalis glossinidius (strain morsitans).